The chain runs to 117 residues: Con-Ins T3 (117 aa).

A signal peptide spans 1–24 (MTTSFYFLLMALGLLLYVCQSSFG). Residues 25 to 29 (NQHTR) constitute a propeptide that is removed on maturation. Position 34 is a 4-hydroxyproline; partial (P34). Cystine bridges form between C38–C101, C50–C114, and C100–C105. Positions 53–94 (KRNDAGKKRGQASPLWQRGGSLSMLKARAKRNEAFHLQRAHR) are cleaved as a propeptide — c peptide. Residue E98 is modified to 4-carboxyglutamate. E109 carries the post-translational modification 4-carboxyglutamate; partial. Position 114 is a cysteine amide (C114). Positions 116-117 (NS) are excised as a propeptide.

This sequence belongs to the insulin family. In terms of assembly, heterodimer of A and B chains; disulfide-linked. In terms of tissue distribution, expressed by the venom gland.

The protein resides in the secreted. Functionally, this venom insulin facilitates prey capture by rapidly inducing hypoglycemic shock. It is one of the smallest known insulin found in nature and lacks the C-terminal segment of the B chain that, in human insulin, mediates engagement of the insulin receptor (INSR) and assembly of the hormone's hexameric storage form. Despite lacking this segment, it both binds and activates human insulin receptor (long isoform (HIR-B) OF INSR) with only a 10-fold lower potency. In vivo, intraperitoneal injection of this peptide into zebrafish lowers blood glucose with the same potency than human insulin. In addition, when applied to water, this peptide reduces overall locomotor activity of zebrafish larvae, observed as a significant decrease in the percentage of time spent swimming and movement frequency. In Conus tulipa (Fish-hunting cone snail), this protein is Con-Ins T3.